Here is a 400-residue protein sequence, read N- to C-terminus: MLPFYAQWVLESYDKAISPLLVSLLGLFSIASVLFVPKNRRFGVGFFIGMLWFYWISLGLRYFDMSFLIPLVVIACGIFMGFVFYIGLWCECLIVRFAFLLLLSYLTPFGFDWIVPESVFAYSYIGVDKLSFALSILALWILFKYKTWWKLGGVICLVFALDFGLKDSKIQNLPPLKIKLAQSAVSQDFDYRMREAKSIFSEHISDIQKAINEEYDVIILPESAFYVPLDSQYFPYFDSLLEMSHKIVIIVGALREEIHTDGRASYFNSTYKFDKGKVSFYDKVHLVPFGETLPSFLLPLVNTFFQGIGGFSAGKDFGYFDIAEIKFKNAICYEGSNRGFYADYPQYVIVTSNNAWFVPSIEPILQKNLMKYYARLYGSVIFHATNLSPAAIITPFVSSR.

Transmembrane regions (helical) follow at residues 16–36 (AISP…VLFV), 42–62 (FGVG…GLRY), 67–87 (FLIP…FYIG), 97–117 (FAFL…IVPE), and 123–143 (SYIG…WILF). The 220-residue stretch at 181-400 (AQSAVSQDFD…AIITPFVSSR (220 aa)) folds into the CN hydrolase domain. The active-site Proton acceptor is the glutamate 222. The active site involves lysine 283. Cysteine 332 functions as the Nucleophile in the catalytic mechanism. The chain crosses the membrane as a helical span at residues 377-397 (YGSVIFHATNLSPAAIITPFV).

Belongs to the CN hydrolase family. Apolipoprotein N-acyltransferase subfamily.

Its subcellular location is the cell inner membrane. It carries out the reaction N-terminal S-1,2-diacyl-sn-glyceryl-L-cysteinyl-[lipoprotein] + a glycerophospholipid = N-acyl-S-1,2-diacyl-sn-glyceryl-L-cysteinyl-[lipoprotein] + a 2-acyl-sn-glycero-3-phospholipid + H(+). The protein operates within protein modification; lipoprotein biosynthesis (N-acyl transfer). In terms of biological role, catalyzes the phospholipid dependent N-acylation of the N-terminal cysteine of apolipoprotein, the last step in lipoprotein maturation. This is Apolipoprotein N-acyltransferase from Helicobacter hepaticus (strain ATCC 51449 / 3B1).